We begin with the raw amino-acid sequence, 212 residues long: Pyrrolidone-carboxylate peptidase (212 aa).

Catalysis depends on residues E80, C143, and H165.

Belongs to the peptidase C15 family. In terms of assembly, homotetramer.

The protein localises to the cytoplasm. It catalyses the reaction Release of an N-terminal pyroglutamyl group from a polypeptide, the second amino acid generally not being Pro.. Functionally, removes 5-oxoproline from various penultimate amino acid residues except L-proline. This chain is Pyrrolidone-carboxylate peptidase, found in Vibrio vulnificus (strain CMCP6).